Consider the following 427-residue polypeptide: Glutamate-1-semialdehyde 2,1-aminomutase (427 aa).

Lysine 268 carries the N6-(pyridoxal phosphate)lysine modification.

Belongs to the class-III pyridoxal-phosphate-dependent aminotransferase family. HemL subfamily. Pyridoxal 5'-phosphate is required as a cofactor.

The protein resides in the cytoplasm. It catalyses the reaction (S)-4-amino-5-oxopentanoate = 5-aminolevulinate. The protein operates within porphyrin-containing compound metabolism; protoporphyrin-IX biosynthesis; 5-aminolevulinate from L-glutamyl-tRNA(Glu): step 2/2. The protein is Glutamate-1-semialdehyde 2,1-aminomutase of Methanococcus vannielii (strain ATCC 35089 / DSM 1224 / JCM 13029 / OCM 148 / SB).